The sequence spans 2055 residues: Citron Rho-interacting kinase (2055 aa).

Met1 is modified (N-acetylmethionine). Positions 97 to 359 (FEVRSLVGCG…FEGLCCHPFF (263 aa)) constitute a Protein kinase domain. ATP is bound by residues 103-111 (VGCGHFAEV) and Lys126. Asp221 (proton acceptor) is an active-site residue. The AGC-kinase C-terminal domain occupies 360–430 (ARTDWNNIRN…SKALGYLGRS (71 aa)). A phosphoserine mark is found at Ser432, Ser439, Ser479, and Ser581. 3 coiled-coil regions span residues 441–1086 (AKVS…QWEA), 1091–1247 (LGDE…VLYS), and 1275–1325 (AKKK…RKAT). The segment at 1132–1328 (LAVKEHKAEI…AAHRKATDHP (197 aa)) is interaction with Rho/Rac. At Tyr1237 the chain carries Phosphotyrosine. Residues 1316-1329 (REEAAHRKATDHPH) are compositionally biased toward basic and acidic residues. Disordered regions lie at residues 1316–1336 (REEAAHRKATDHPHPSTPATA) and 1348–1377 (SPEHQPSAMSLLAPPSSRRKESSTPEEFSR). The segment covering 1353 to 1363 (PSAMSLLAPPS) has biased composition (low complexity). Positions 1365 to 1377 (RRKESSTPEEFSR) are enriched in basic and acidic residues. The Phorbol-ester/DAG-type zinc-finger motif lies at 1388-1437 (PHRFNVGLNMRATKCAVCLDTVHFGRQASKCLECQVMCHPKCSTCLPATC). Residues 1469–1589 (SLHLEGWMKV…WVTALESVVA (121 aa)) enclose the PH domain. The CNH domain occupies 1617-1907 (RLDMNCTLPF…RYLGPAISSG (291 aa)). Lys1747 bears the N6-acetyllysine mark. Positions 1932 to 2040 (SGTEQHRVPS…RGRLPAGAVR (109 aa)) are disordered. Over residues 1939 to 1948 (VPSTSRSSPN) the composition is skewed to polar residues. At Ser1966 the chain carries Phosphoserine. Residues 1974–2031 (SHPREPSTPHRYRDREGRTELRRDKSPGRPLEREKSPGRMLSTRRERSPGRLFEDSSR) show a composition bias toward basic and acidic residues. The SH3-binding motif lies at 1979 to 1984 (PSTPHR). Ser2021 bears the Phosphoserine mark. Thr2041 is subject to Phosphothreonine.

The protein belongs to the protein kinase superfamily. AGC Ser/Thr protein kinase family. In terms of assembly, interacts with TTC3. Homodimer. Directly interacts with KIF14 depending on the activation state (stronger interaction with the kinase-dead form). As to expression, a major signal was observed in testis and brain, but it was also detected in thymus, spleen, kidney, heart and lung.

Its subcellular location is the cytoplasm. The catalysed reaction is L-seryl-[protein] + ATP = O-phospho-L-seryl-[protein] + ADP + H(+). It carries out the reaction L-threonyl-[protein] + ATP = O-phospho-L-threonyl-[protein] + ADP + H(+). Plays a role in cytokinesis. Required for KIF14 localization to the central spindle and midbody. Probable RHO/RAC effector that binds to the GTP-bound forms of RHO and RAC1. It probably binds p21 with a tighter specificity in vivo. Displays serine/threonine protein kinase activity. Plays an important role in the regulation of cytokinesis and the development of the central nervous system. Phosphorylates MYL9/MLC2. This is Citron Rho-interacting kinase (Cit) from Mus musculus (Mouse).